A 319-amino-acid polypeptide reads, in one-letter code: Plastid lipid-associated protein 2, chloroplastic (319 aa).

Residues 1–59 (MATVQFFNQFPCKTRVQSSANSKPLSKPPSSLVPMSALTRRPSFPPGEFAVSRSDFRVR) constitute a chloroplast transit peptide. The interval 17 to 39 (QSSANSKPLSKPPSSLVPMSALT) is disordered. Over residues 18 to 36 (SSANSKPLSKPPSSLVPMS) the composition is skewed to low complexity.

The protein belongs to the PAP/fibrillin family. As to expression, expressed almost exclusively in petals. Very weak expression in all other organs.

The protein resides in the plastid. The protein localises to the chloroplast. In terms of biological role, may stabilize the accumulated carotenoid structures. In Brassica campestris (Field mustard), this protein is Plastid lipid-associated protein 2, chloroplastic (PAP2).